We begin with the raw amino-acid sequence, 172 residues long: Epithelial membrane protein 2 (172 aa).

A run of 4 helical transmembrane segments spans residues 1–21 (MLVILAFIIVFHIVSTALLFI), 72–92 (TMILSTILSCISFLIFLLQLF), 100–120 (FVLTAIIQLMSCLCVMIGASV), and 148–168 (FILAWVAFAFTFISGLMYMIL).

Belongs to the PMP-22/EMP/MP20 family. In terms of assembly, interacts with PTK2; regulates PTK2 activation and localization. Interacts with ITGB3; regulates the levels of the heterodimer ITGA5-ITGB3 integrin surface expression. Interacts with P2RX7 (via C-terminus). Interacts with ITGB1; the interaction may be direct or indirect and ITGB1 has a heterodimer form. As to expression, expressed in glomeruli.

The protein localises to the golgi apparatus membrane. The protein resides in the cell membrane. It localises to the apical cell membrane. It is found in the membrane raft. Its subcellular location is the cytoplasm. The protein localises to the nucleus. The protein resides in the perinuclear region. In terms of biological role, functions as a key regulator of cell membrane composition by regulating protein surface expression. Also, plays a role in regulation of processes including cell migration, cell proliferation, cell contraction and cell adhesion. Regulates transepithelial migration of neutrophils into the alveolar lumen, potentially via mediation of cell surface expression of adhesion markers and lipid raft formation. Negatively regulates caveolae formation by reducing CAV1 expression and CAV1 amount by increasing lysosomal degradation. Facilitates surface trafficking and the formation of lipid rafts bearing GPI-anchor proteins. Regulates surface expression of MHC1 and ICAM1 proteins increasing susceptibility to T-cell mediated cytotoxicity. Regulates the plasma membrane expression of the integrin heterodimers ITGA6-ITGB1, ITGA5-ITGB3 and ITGA5-ITGB1 resulting in modulation of cell-matrix adhesion. Also regulates many processes through PTK2. Regulates blood vessel endothelial cell migration and angiogenesis by regulating VEGF protein expression through PTK2 activation. Regulates cell migration and cell contraction through PTK2 and SRC activation. Regulates focal adhesion density, F-actin conformation and cell adhesion capacity through interaction with PTK2. Positively regulates cell proliferation. Plays a role during cell death and cell blebbing. Promotes angiogenesis and vasculogenesis through induction of VEGFA via a HIF1A-dependent pathway. Also plays a role in embryo implantation by regulating surface trafficking of integrin heterodimer ITGA5-ITGB3. Plays a role in placental angiogenesis and uterine natural killer cell regulation at the maternal-fetal placental interface, however not required in the maternal tissues for a viable pregnancy. Involved in the early stages of embryogenic development and cardiogenesis, potentially via regulation of epithelial-mesenchymal transition timing. May play a role in glomerular filtration. The sequence is that of Epithelial membrane protein 2 (Emp2) from Rattus norvegicus (Rat).